A 207-amino-acid polypeptide reads, in one-letter code: Histone H1 (207 aa).

Residues 1–15 (MAEVAPAPAAAAPAK) are compositionally biased toward low complexity. Disordered regions lie at residues 1–28 (MAEV…PKKA) and 105–207 (EAKK…PKKK). An N-acetylalanine modification is found at A2. Positions 16 to 27 (APKKKAAAKPKK) are enriched in basic residues. Residues 28–101 (AGPSVGELIV…GASGSFKLNK (74 aa)) form the H15 domain. 2 stretches are compositionally biased toward basic residues: residues 117–168 (KAKK…KVKK) and 175–207 (KAAK…PKKK).

It belongs to the histone H1/H5 family. Oncorhyncin II is expressed in skin.

Its subcellular location is the nucleus. It localises to the chromosome. The protein resides in the secreted. Its function is as follows. Histones H1 are necessary for the condensation of nucleosome chains into higher-order structures. Functionally, oncorhyncin II has antibacterial activity against Gram-positive and Gram-negative bacteria at submicromolar concentrations. Potentially important role in mucosal defense. In Oncorhynchus mykiss (Rainbow trout), this protein is Histone H1.